The chain runs to 160 residues: SsrA-binding protein (160 aa).

The span at 138–148 (KRDDIKDREWQ) shows a compositional bias: basic and acidic residues. Residues 138-160 (KRDDIKDREWQTAKSRIMKHANR) are disordered.

This sequence belongs to the SmpB family.

It is found in the cytoplasm. Required for rescue of stalled ribosomes mediated by trans-translation. Binds to transfer-messenger RNA (tmRNA), required for stable association of tmRNA with ribosomes. tmRNA and SmpB together mimic tRNA shape, replacing the anticodon stem-loop with SmpB. tmRNA is encoded by the ssrA gene; the 2 termini fold to resemble tRNA(Ala) and it encodes a 'tag peptide', a short internal open reading frame. During trans-translation Ala-aminoacylated tmRNA acts like a tRNA, entering the A-site of stalled ribosomes, displacing the stalled mRNA. The ribosome then switches to translate the ORF on the tmRNA; the nascent peptide is terminated with the 'tag peptide' encoded by the tmRNA and targeted for degradation. The ribosome is freed to recommence translation, which seems to be the essential function of trans-translation. The chain is SsrA-binding protein from Serratia proteamaculans (strain 568).